A 152-amino-acid polypeptide reads, in one-letter code: Chemokine-like factor (152 aa).

In terms of domain architecture, MARVEL spans 13 to 133 (FCCTLKCFVK…DCALMCQKLR (121 aa)). The next 4 membrane-spanning stretches (helical) occupy residues 19-39 (CFVKFLRLVVTVTSMIFFIVG), 46-66 (IVITGFEVTVIFCFLVLYTCG), 81-101 (VINSMVTALCMLIVSVLALIP), and 108-128 (ILGGVFGFLTVTCTIADCALM).

The protein belongs to the chemokine-like factor family. In terms of tissue distribution, ubiquitous.

Its subcellular location is the membrane. In terms of biological role, may play an important role in inflammation and regeneration of skeletal muscle. Essential for embryonic development. The protein is Chemokine-like factor (Cklf) of Mus musculus (Mouse).